Reading from the N-terminus, the 537-residue chain is Leucine-rich repeat LGI family member 4 (537 aa).

The signal sequence occupies residues 1–19; it reads MGGAGILLFLLAWAGAGVA. LRR repeat units follow at residues 53-74, 77-98, 101-122, and 125-146; these read TLLS…SFLK, SLHL…AFIG, YLQY…ALRG, and SLTH…LFRG. The 51-residue stretch at 158–208 folds into the LRRCT domain; that stretch reads NPFQCDCRVLWLLQWMPTVNASVGTGACAGPPAVAQIQLNHLDPKKFKCRA. N-linked (GlcNAc...) asparagine glycosylation is present at asparagine 177. EAR repeat units follow at residues 210–252, 256–298, 302–349, 351–394, 396–439, 441–483, and 487–532; these read ELSW…VWDY, RFRP…SRSS, RLTP…CRDG, GFYP…HWVG, RFER…RWDG, MFRL…RFES, and ILEP…QHHE.

In terms of assembly, can bind to ADAM11, ADAM22 and ADAM23. In terms of tissue distribution, brain. Expressed in the entire developing peripheral nerves. Strongly expressed in the trigeminal nerve and ganglion and particularly abundant in the boundary cap cells - a transient population of cells that contributes to the Schwann cell population of the dorsal root nerve.

The protein resides in the secreted. In terms of biological role, component of Schwann cell signaling pathway(s) that controls axon segregation and myelin formation. The protein is Leucine-rich repeat LGI family member 4 (Lgi4) of Mus musculus (Mouse).